Consider the following 126-residue polypeptide: Holo-[acyl-carrier-protein] synthase (126 aa).

Mg(2+) contacts are provided by Asp9 and Glu58.

The protein belongs to the P-Pant transferase superfamily. AcpS family. Requires Mg(2+) as cofactor.

Its subcellular location is the cytoplasm. The catalysed reaction is apo-[ACP] + CoA = holo-[ACP] + adenosine 3',5'-bisphosphate + H(+). In terms of biological role, transfers the 4'-phosphopantetheine moiety from coenzyme A to a Ser of acyl-carrier-protein. In Citrobacter koseri (strain ATCC BAA-895 / CDC 4225-83 / SGSC4696), this protein is Holo-[acyl-carrier-protein] synthase.